The sequence spans 373 residues: Alanine racemase (373 aa).

K40 (proton acceptor; specific for D-alanine) is an active-site residue. At K40 the chain carries N6-(pyridoxal phosphate)lysine. R140 contributes to the substrate binding site. Y268 serves as the catalytic Proton acceptor; specific for L-alanine. Substrate is bound at residue M315.

The protein belongs to the alanine racemase family. Pyridoxal 5'-phosphate serves as cofactor.

It catalyses the reaction L-alanine = D-alanine. It functions in the pathway amino-acid biosynthesis; D-alanine biosynthesis; D-alanine from L-alanine: step 1/1. Its function is as follows. Catalyzes the interconversion of L-alanine and D-alanine. May also act on other amino acids. The sequence is that of Alanine racemase (alr) from Limosilactobacillus fermentum (strain NBRC 3956 / LMG 18251) (Lactobacillus fermentum).